A 113-amino-acid polypeptide reads, in one-letter code: Class I hydrophobin POH1 (113 aa).

The first 26 residues, 1 to 26, serve as a signal peptide directing secretion; the sequence is MFSIRISTVVLAASALLAVAIPMTNT. Intrachain disulfides connect Cys31–Cys93, Cys38–Cys87, Cys39–Cys74, and Cys94–Cys107.

Belongs to the fungal hydrophobin family. As to quaternary structure, self-assembles to form functional amyloid fibrils called rodlets. Self-assembly into fibrillar rodlets occurs spontaneously at hydrophobic:hydrophilic interfaces and the rodlets further associate laterally to form amphipathic monolayers. Expressed in the fruiting bodies but not in vegetative mycelium.

It localises to the secreted. The protein resides in the cell wall. Aerial growth, conidiation, and dispersal of filamentous fungi in the environment rely upon a capability of their secreting small amphipathic proteins called hydrophobins (HPBs) with low sequence identity. Class I can self-assemble into an outermost layer of rodlet bundles on aerial cell surfaces, conferring cellular hydrophobicity that supports fungal growth, development and dispersal; whereas Class II form highly ordered films at water-air interfaces through intermolecular interactions but contribute nothing to the rodlet structure. POH1 is a class I hydrophobin that is involved in the formation of mycelium knots and subsequent fruiting bodies. The chain is Class I hydrophobin POH1 from Pleurotus ostreatus (Oyster mushroom).